We begin with the raw amino-acid sequence, 314 residues long: Dihydroorotate dehydrogenase (fumarate) (314 aa).

Substrate is bound by residues K46, 70-74 (NSMGL), and N130. 46-47 (KS) is a binding site for FMN. N130 lines the FMN pocket. Catalysis depends on nucleophile residues S132 and C133. Residues K167 and I195 each coordinate FMN. 196 to 197 (NS) contacts substrate. FMN contacts are provided by residues G224, 252 to 253 (GG), and 274 to 275 (GT).

It belongs to the dihydroorotate dehydrogenase family. Type 1 subfamily. Homodimer. It depends on FMN as a cofactor.

It is found in the cytoplasm. It catalyses the reaction (S)-dihydroorotate + fumarate = orotate + succinate. Its pathway is pyrimidine metabolism; UMP biosynthesis via de novo pathway. With respect to regulation, the activity is independent of the presence of oxygen. Catalyzes the conversion of dihydroorotate to orotate with fumarate as the electron acceptor. The chain is Dihydroorotate dehydrogenase (fumarate) (URA1) from Lachancea kluyveri (strain ATCC 58438 / CBS 3082 / BCRC 21498 / NBRC 1685 / JCM 7257 / NCYC 543 / NRRL Y-12651) (Yeast).